Here is a 373-residue protein sequence, read N- to C-terminus: Aromatic amino acid aminotransferase (373 aa).

N6-(pyridoxal phosphate)lysine is present on lysine 212.

This sequence belongs to the class-II pyridoxal-phosphate-dependent aminotransferase family. In terms of assembly, homodimer. Pyridoxal 5'-phosphate serves as cofactor.

It catalyses the reaction an aromatic L-alpha-amino acid + 2-oxoglutarate = an aromatic oxo-acid + L-glutamate. Aminotransferase that catalyzes the conversion of aromatic amino acids and 2-oxoglutarate into corresponding aromatic oxo acids and L-glutamate. The polypeptide is Aromatic amino acid aminotransferase (Corynebacterium jeikeium (strain K411)).